We begin with the raw amino-acid sequence, 284 residues long: RNase adapter protein RapZ (284 aa).

Residue 8–15 (GRSGSGKS) coordinates ATP. 56-59 (DVRN) is a binding site for GTP. Residues 266–284 (RSRGKNVQSRHRTLEKRKP) are RNA-binding.

This sequence belongs to the RapZ-like family. RapZ subfamily. In terms of assembly, homotrimer.

Modulates the synthesis of GlmS, by affecting the processing and stability of the regulatory small RNA GlmZ. When glucosamine-6-phosphate (GlcN6P) concentrations are high in the cell, RapZ binds GlmZ and targets it to cleavage by RNase E. Consequently, GlmZ is inactivated and unable to activate GlmS synthesis. Under low GlcN6P concentrations, RapZ is sequestered and inactivated by an other regulatory small RNA, GlmY, preventing GlmZ degradation and leading to synthesis of GlmS. In Shigella dysenteriae serotype 1 (strain Sd197), this protein is RNase adapter protein RapZ.